The primary structure comprises 809 residues: MTLKERCVFKLLTCLTTQHDLRLVLVASAVCLAGCFTTFRLYSRMRGARGVVRAAWLLLTGLVAGSSVWATHFIAMVAFTPGLKTGYSPTGTLLSLMIAALFMASGFAVASAQRSTTNDFAGGVLIGLGVAAMHYMGMSAFVTQGQLVWEHATVGMSAVLGVGGATAALLLAGTARTIRRQAVGGGMLCLGIVMLHFTGMSAITIVPDASLTVPDQLLSGGMLTLAVGSITSMIILGGLGAVAIESQTSRSALERIRRLANAAYEGLVVVQSGRINDANAAFCDLVGAPLAELVGRPLFGEILTFDEADPSREDVRREGRLRPLVGGREIPVEVFSRLMDDGARVETSGLTVLAVRDLRERRAAEEKIRYLAEHDGLTGLLNRNSLQMRLAAAIDRVEASGESLAVICIDLDHFKEANDQHGHLAGDALLVETARRLQSAVQAPSFAARLGGDEFIVVQIAGGDQPAVAAELAGRLIEMLAAPVPFDGQELAMGSSLGVSLYPDDGRTAEALMANADMALYRAKESGRGVYRFFKREMDDTIRERRNLARDLRQGIADNELIVHYQPLARAADGEVCGFEALVRWKHPTRGMIPPLDFIPVAEENGLIEALGDWVLRRACADAAAWEKPLRIAVNLSPIQLHNPALPTLVHEVLITTGLSPSRLELEITESALFKDYQRALDNLRRLKALGVRIAMDDFGTGFSSLSTLQSFPFDKIKIDKSFVENIHRHDRATAIVRAVLGLGRSLEIPVVAEGVETEEQILFLRGEDCAELQGYAIGRPAPVDALTMWTTAGDPGAIAPKSKTRRSA.

Residues 19-206 form the MHYT domain; that stretch reads HDLRLVLVAS…FTGMSAITIV (188 aa). A run of 7 helical transmembrane segments spans residues 23-43, 57-77, 92-112, 122-142, 152-172, 186-206, and 224-244; these read LVLVASAVCLAGCFTTFRLYS, LLLTGLVAGSSVWATHFIAMV, TLLSLMIAALFMASGFAVASA, GGVLIGLGVAAMHYMGMSAFV, ATVGMSAVLGVGGATAALLLA, GMLCLGIVMLHFTGMSAITIV, and TLAVGSITSMIILGGLGAVAI. One can recognise a PAS domain in the interval 254–317; it reads ERIRRLANAA…ADPSREDVRR (64 aa). Residues 402–536 form the GGDEF domain; sequence ESLAVICIDL…GRGVYRFFKR (135 aa). The region spanning 545–795 is the EAL domain; it reads RRNLARDLRQ…ALTMWTTAGD (251 aa).

It is found in the cell membrane. This is an uncharacterized protein from Caulobacter vibrioides (strain ATCC 19089 / CIP 103742 / CB 15) (Caulobacter crescentus).